The following is a 353-amino-acid chain: UPF0283 membrane protein YcjF (353 aa).

Basic and acidic residues predominate over residues 1 to 19 (MSEPLKPRIDFAEPLKEEP). Residues 1–35 (MSEPLKPRIDFAEPLKEEPTSAFKAQQTFSEAESR) form a disordered region. The next 3 membrane-spanning stretches (helical) occupy residues 70 to 90 (MVMG…IQWT), 100 to 120 (VALG…GSVV), and 213 to 233 (ESTL…FIAW).

This sequence belongs to the UPF0283 family.

Its subcellular location is the cell inner membrane. The chain is UPF0283 membrane protein YcjF from Salmonella agona (strain SL483).